Reading from the N-terminus, the 421-residue chain is UDP-N-acetylglucosamine 1-carboxyvinyltransferase 1 (421 aa).

Residue 22–23 participates in phosphoenolpyruvate binding; sequence KN. Arg95 is a binding site for UDP-N-acetyl-alpha-D-glucosamine. The active-site Proton donor is Cys119. The residue at position 119 (Cys119) is a 2-(S-cysteinyl)pyruvic acid O-phosphothioketal. UDP-N-acetyl-alpha-D-glucosamine-binding positions include 124–128, Asp308, and Val330; that span reads RPIEQ.

The protein belongs to the EPSP synthase family. MurA subfamily.

The protein localises to the cytoplasm. The enzyme catalyses phosphoenolpyruvate + UDP-N-acetyl-alpha-D-glucosamine = UDP-N-acetyl-3-O-(1-carboxyvinyl)-alpha-D-glucosamine + phosphate. The protein operates within cell wall biogenesis; peptidoglycan biosynthesis. Its function is as follows. Cell wall formation. Adds enolpyruvyl to UDP-N-acetylglucosamine. The polypeptide is UDP-N-acetylglucosamine 1-carboxyvinyltransferase 1 (Staphylococcus aureus (strain bovine RF122 / ET3-1)).